Here is a 173-residue protein sequence, read N- to C-terminus: MDIAIQHPWFKRALGPFYPSRLFDQFFGEGLFEYDLLPFLSSTISPYYRQSLFRTVLDSGVSEVRSDRDKFVIFLDVKHFSPEDLTVKVQEDFVEIHGKHNERQDDHGYISREFHRRYRLPSNVDQSALSCSLSADGMLTFSGPKVPSGVDAGHSERAIPVSREEKPSSAPTS.

Position 1 is an N-acetylmethionine (M1). The tract at residues 1-63 (MDIAIQHPWF…RTVLDSGVSE (63 aa)) is required for complex formation with BFSP1 and BFSP2. At Q6 the chain carries Deamidated glutamine; partial. Position 45 is a phosphoserine (S45). Residue Q50 is modified to Deamidated glutamine; partial. The 111-residue stretch at 52 to 162 (LFRTVLDSGV…GHSERAIPVS (111 aa)) folds into the sHSP domain. The residue at position 70 (K70) is an N6-acetyllysine. H79 contacts Zn(2+). Q90 is subject to Deamidated glutamine; partial. K99 is modified (N6-acetyllysine). H100 provides a ligand contact to Zn(2+). N101 is subject to Deamidated asparagine; partial. Residues E102 and H107 each coordinate Zn(2+). S122 carries the phosphoserine modification. N123 is subject to Deamidated asparagine; partial. The segment at 144–173 (PKVPSGVDAGHSERAIPVSREEKPSSAPTS) is disordered. A compositionally biased stretch (basic and acidic residues) spans 153–167 (GHSERAIPVSREEKP). H154 serves as a coordination point for Zn(2+). A glycan (O-linked (GlcNAc) serine) is linked at S162.

Belongs to the small heat shock protein (HSP20) family. As to quaternary structure, heteromer composed of three CRYAA and one CRYAB subunits. Inter-subunit bridging via zinc ions enhances stability, which is crucial as there is no protein turn over in the lens. Can also form homodimers and homotetramers (dimers of dimers) which serve as the building blocks of homooligomers. Within homooligomers, the zinc-binding motif is created from residues of 3 different molecules. His-100 and Glu-102 from one molecule are ligands of the zinc ion, and His-107 and His-154 residues from additional molecules complete the site with tetrahedral coordination geometry. Part of a complex required for lens intermediate filament formation composed of BFSP1, BFSP2 and CRYAA. In terms of processing, acetylation at Lys-70 may increase chaperone activity. Post-translationally, undergoes age-dependent proteolytical cleavage at the C-terminus.

It is found in the cytoplasm. It localises to the nucleus. Contributes to the transparency and refractive index of the lens. Acts as a chaperone, preventing aggregation of various proteins under a wide range of stress conditions. Required for the correct formation of lens intermediate filaments as part of a complex composed of BFSP1, BFSP2 and CRYAA. This is Alpha-crystallin A chain (CRYAA) from Sus scrofa (Pig).